Reading from the N-terminus, the 156-residue chain is Transcription elongation factor GreA (156 aa).

Residues 44 to 67 (ENAEYEAAKEKQAMIEGRIQDLCQ) adopt a coiled-coil conformation.

This sequence belongs to the GreA/GreB family.

Its function is as follows. Necessary for efficient RNA polymerase transcription elongation past template-encoded arresting sites. The arresting sites in DNA have the property of trapping a certain fraction of elongating RNA polymerases that pass through, resulting in locked ternary complexes. Cleavage of the nascent transcript by cleavage factors such as GreA or GreB allows the resumption of elongation from the new 3'terminus. GreA releases sequences of 2 to 3 nucleotides. In Syntrophobacter fumaroxidans (strain DSM 10017 / MPOB), this protein is Transcription elongation factor GreA.